A 3255-amino-acid polypeptide reads, in one-letter code: Genome polyprotein (3255 aa).

Residues 292–437 (VMNQQTLMAF…HSITHRMVQY (146 aa)) form the Peptidase S30 domain. Active-site for P1 proteinase activity residues include H345, D354, and S388. An Involved in interaction with stylet and aphid transmission motif is present at residues 489–492 (KITC). Positions 747–749 (PTK) match the Involved in virions binding and aphid transmission motif. The region spanning 773–895 (MFVTKDGYCY…ESEMQHYRVG (123 aa)) is the Peptidase C6 domain. Catalysis depends on for helper component proteinase activity residues C781 and H854. Residues 1397 to 1549 (EIAHNEYRDI…PMHMVDIATE (153 aa)) enclose the Helicase ATP-binding domain. 1410 to 1417 (GGVGSGKS) contributes to the ATP binding site. The DECH box motif lies at 1499-1502 (DECH). Residues 1568-1727 (DATKKGDNIL…GLPVMTSNVS (160 aa)) enclose the Helicase C-terminal domain. Residues 2062 to 2069 (EKGKKSGK) carry the Nuclear localization signal motif. Residue Y2084 is modified to O-(5'-phospho-RNA)-tyrosine. Positions 2215-2433 (SKTLFRGLRD…MVWGGINLIN (219 aa)) constitute a Peptidase C4 domain. Catalysis depends on for nuclear inclusion protein A activity residues H2260, D2295, and C2365. One can recognise a RdRp catalytic domain in the interval 2699-2823 (WVYCDADGSQ…AIKPEHESLL (125 aa)). The tract at residues 2980–3028 (AKLDAGQGSKTDDKQKNSADPKDNIITEKGSGSGQMKKDDDINAGLHGK) is disordered. Over residues 2989–3005 (KTDDKQKNSADPKDNII) the composition is skewed to basic and acidic residues. The residue at position 3237 (T3237) is a Phosphothreonine.

The protein belongs to the potyviridae genome polyprotein family. In terms of assembly, interacts with host eIF4E protein (via cap-binding region); this interaction mediates the translation of the VPg-viral RNA conjugates. Part of a complex that comprises VPg, RNA, host EIF4E and EIF4G; this interaction mediates the translation of the VPg-viral RNA conjugates. In terms of processing, VPg is uridylylated by the polymerase and is covalently attached to the 5'-end of the genomic RNA. This uridylylated form acts as a nucleotide-peptide primer for the polymerase. Post-translationally, potyviral RNA is expressed as two polyproteins which undergo post-translational proteolytic processing. Genome polyprotein is processed by NIa-pro, P1 and HC-pro proteinases resulting in the production of at least ten individual proteins. P3N-PIPO polyprotein is cleaved by P1 and HC-pro proteinases resulting in the production of three individual proteins. The P1 proteinase and the HC-pro cleave only their respective C-termini autocatalytically. 6K1 is essential for proper proteolytic separation of P3 from CI.

The protein resides in the host cytoplasmic vesicle. It is found in the host nucleus. It localises to the virion. The catalysed reaction is RNA(n) + a ribonucleoside 5'-triphosphate = RNA(n+1) + diphosphate. It catalyses the reaction Hydrolyzes glutaminyl bonds, and activity is further restricted by preferences for the amino acids in P6 - P1' that vary with the species of potyvirus, e.g. Glu-Xaa-Xaa-Tyr-Xaa-Gln-|-(Ser or Gly) for the enzyme from tobacco etch virus. The natural substrate is the viral polyprotein, but other proteins and oligopeptides containing the appropriate consensus sequence are also cleaved.. The enzyme catalyses Hydrolyzes a Gly-|-Gly bond at its own C-terminus, commonly in the sequence -Tyr-Xaa-Val-Gly-|-Gly, in the processing of the potyviral polyprotein.. Functionally, required for aphid transmission and also has proteolytic activity. Only cleaves a Gly-Gly dipeptide at its own C-terminus. Interacts with virions and aphid stylets. Acts as a suppressor of RNA-mediated gene silencing, also known as post-transcriptional gene silencing (PTGS), a mechanism of plant viral defense that limits the accumulation of viral RNAs. May have RNA-binding activity. Has helicase activity. It may be involved in replication. In terms of biological role, indispensable for virus replication. Reduces the abundance of host transcripts related to jasmonic acid biosynthesis therefore altering the host defenses. In order to increase its own stability, decreases host protein degradation pathways. Its function is as follows. Indispensable for virus replication. Functionally, mediates the cap-independent, EIF4E-dependent translation of viral genomic RNAs. Binds to the cap-binding site of host EIF4E and thus interferes with the host EIF4E-dependent mRNA export and translation. VPg-RNA directly binds EIF4E and is a template for transcription. Also forms trimeric complexes with EIF4E-EIF4G, which are templates for translation. Has RNA-binding and proteolytic activities. In terms of biological role, an RNA-dependent RNA polymerase that plays an essential role in the virus replication. Its function is as follows. Involved in aphid transmission, cell-to-cell and systemis movement, encapsidation of the viral RNA and in the regulation of viral RNA amplification. This Lettuce mosaic virus (strain 0 / isolate French) (LMV) protein is Genome polyprotein.